The chain runs to 484 residues: Glutamate--tRNA ligase (484 aa).

Residues 11 to 21 (PSPTGLLHIGN) carry the 'HIGH' region motif. Residues 255–259 (KLSKR) carry the 'KMSKS' region motif. Lys-258 serves as a coordination point for ATP.

This sequence belongs to the class-I aminoacyl-tRNA synthetase family. Glutamate--tRNA ligase type 1 subfamily. As to quaternary structure, monomer.

It localises to the cytoplasm. The catalysed reaction is tRNA(Glu) + L-glutamate + ATP = L-glutamyl-tRNA(Glu) + AMP + diphosphate. Its function is as follows. Catalyzes the attachment of glutamate to tRNA(Glu) in a two-step reaction: glutamate is first activated by ATP to form Glu-AMP and then transferred to the acceptor end of tRNA(Glu). The protein is Glutamate--tRNA ligase of Streptococcus agalactiae serotype V (strain ATCC BAA-611 / 2603 V/R).